Here is a 159-residue protein sequence, read N- to C-terminus: Ribosomal RNA large subunit methyltransferase H (159 aa).

S-adenosyl-L-methionine is bound by residues leucine 76, glycine 107, and 126–131 (LSKLTM).

It belongs to the RNA methyltransferase RlmH family. Homodimer.

The protein resides in the cytoplasm. The enzyme catalyses pseudouridine(1915) in 23S rRNA + S-adenosyl-L-methionine = N(3)-methylpseudouridine(1915) in 23S rRNA + S-adenosyl-L-homocysteine + H(+). Specifically methylates the pseudouridine at position 1915 (m3Psi1915) in 23S rRNA. The chain is Ribosomal RNA large subunit methyltransferase H from Acinetobacter baylyi (strain ATCC 33305 / BD413 / ADP1).